The following is a 518-amino-acid chain: MGNRTSRHHRAAPEQPPPQPKPKPQPQQQQQQWPRPQQPTPPPAAAPDAAMGRVLGRPMEDVRATYTFGRELGRGQFGVTYLVTHKATGKRFACKSIATRKLAHRDDIEDVRREVQIMHHLTGHRNIVELRGAYEDRHSVNLIMELCEGGELFDRIIARGHYSERAAAALCREIVAVVHSCHSMGVFHRDLKPENFLFLSKSEDSPLKATDFGLSVFFKPGEHFKDLVGSAYYVAPEVLKRNYGAEADIWSAGVILYILLSGVPPFWAESEDGIFDAVLRGHIDFSSEPWPSISNGAKDLVKKMLRQDPKERLTSAEILNHPWIREDGEAPDKPLDITVISRMKQFRAMNKLKKVALKVVAENLSDEEITGLKEMFRSLDTDNSGTITLEELRSGLPKLGTKISESEIRQLMEAADVDGNGTIDYAEFISATMHMNRLEKEDHILKAFEYFDKDHSGYITVDELEEALKKYDMGDDKTIKEIIAEVDTDHDGRINYQEFVAMMRNNNPEIAPNRRRMF.

Residues 1–10 (MGNRTSRHHR) show a composition bias toward basic residues. The tract at residues 1–49 (MGNRTSRHHRAAPEQPPPQPKPKPQPQQQQQQWPRPQQPTPPPAAAPDA) is disordered. The N-myristoyl glycine moiety is linked to residue Gly2. Pro residues predominate over residues 14 to 25 (EQPPPQPKPKPQ). Residues 26 to 35 (PQQQQQQWPR) are compositionally biased toward low complexity. The segment covering 36-45 (PQQPTPPPAA) has biased composition (pro residues). A Protein kinase domain is found at 66–324 (YTFGRELGRG…SAEILNHPWI (259 aa)). ATP-binding positions include 72–80 (LGRGQFGVT) and Lys95. The active-site Proton acceptor is the Asp190. Residues 330 to 360 (APDKPLDITVISRMKQFRAMNKLKKVALKVV) form an autoinhibitory domain region. EF-hand domains are found at residues 367-402 (EEITGLKEMFRSLDTDNSGTITLEELRSGLPKLGTK), 403-438 (ISESEIRQLMEAADVDGNGTIDYAEFISATMHMNRL), 439-474 (EKEDHILKAFEYFDKDHSGYITVDELEEALKKYDMG), and 475-509 (DDKTIKEIIAEVDTDHDGRINYQEFVAMMRNNNPE). 20 residues coordinate Ca(2+): Asp380, Asp382, Ser384, Thr386, Glu391, Asp416, Asp418, Asn420, Thr422, Glu427, Asp452, Asp454, Ser456, Tyr458, Glu463, Asp487, Asp489, Asp491, Arg493, and Glu498.

Belongs to the protein kinase superfamily. Ser/Thr protein kinase family. CDPK subfamily. As to expression, expressed in roots and leaf blades.

Its subcellular location is the membrane. It catalyses the reaction L-seryl-[protein] + ATP = O-phospho-L-seryl-[protein] + ADP + H(+). It carries out the reaction L-threonyl-[protein] + ATP = O-phospho-L-threonyl-[protein] + ADP + H(+). Activated by calcium. Autophosphorylation may play an important role in the regulation of the kinase activity. May play a role in signal transduction pathways that involve calcium as a second messenger. In Oryza sativa subsp. japonica (Rice), this protein is Calcium-dependent protein kinase 1.